The sequence spans 302 residues: Ornithine carbamoyltransferase (302 aa).

Carbamoyl phosphate-binding positions include 52-55 (STRT), glutamine 79, arginine 103, and 130-133 (HPCQ). Residues asparagine 161, aspartate 221, and 225–226 (SM) each bind L-ornithine. Carbamoyl phosphate is bound by residues 261 to 262 (CL) and arginine 289.

This sequence belongs to the aspartate/ornithine carbamoyltransferase superfamily. OTCase family.

Its subcellular location is the cytoplasm. The catalysed reaction is carbamoyl phosphate + L-ornithine = L-citrulline + phosphate + H(+). Its pathway is amino-acid biosynthesis; L-arginine biosynthesis; L-arginine from L-ornithine and carbamoyl phosphate: step 1/3. Reversibly catalyzes the transfer of the carbamoyl group from carbamoyl phosphate (CP) to the N(epsilon) atom of ornithine (ORN) to produce L-citrulline. This is Ornithine carbamoyltransferase from Methanosarcina mazei (strain ATCC BAA-159 / DSM 3647 / Goe1 / Go1 / JCM 11833 / OCM 88) (Methanosarcina frisia).